The following is a 212-amino-acid chain: Glycerol-3-phosphate acyltransferase (212 aa).

The next 5 helical transmembrane spans lie at 9–29, 67–87, 95–115, 128–148, and 168–190; these read AACLVPVILTALLLLAIGYLL, GPALVVFLIDVGKGALAVLLA, WLQVLAGLAALAGHIWPVWLG, MFLGLAWPVGLACFGLFMAVI, and LMVVSGGSSAYVVVSLVASLMVL.

Belongs to the PlsY family. In terms of assembly, probably interacts with PlsX.

Its subcellular location is the cell inner membrane. The catalysed reaction is an acyl phosphate + sn-glycerol 3-phosphate = a 1-acyl-sn-glycero-3-phosphate + phosphate. The protein operates within lipid metabolism; phospholipid metabolism. In terms of biological role, catalyzes the transfer of an acyl group from acyl-phosphate (acyl-PO(4)) to glycerol-3-phosphate (G3P) to form lysophosphatidic acid (LPA). This enzyme utilizes acyl-phosphate as fatty acyl donor, but not acyl-CoA or acyl-ACP. In Parasynechococcus marenigrum (strain WH8102), this protein is Glycerol-3-phosphate acyltransferase.